The following is a 329-amino-acid chain: GTP 3',8-cyclase (329 aa).

A Radical SAM core domain is found at 8-234; that stretch reads AFARKFYYLR…QLRQRSDGPA (227 aa). Position 17 (arginine 17) interacts with GTP. [4Fe-4S] cluster contacts are provided by cysteine 24 and cysteine 28. Tyrosine 30 serves as a coordination point for S-adenosyl-L-methionine. Position 31 (cysteine 31) interacts with [4Fe-4S] cluster. Arginine 68 contributes to the GTP binding site. Glycine 72 lines the S-adenosyl-L-methionine pocket. Threonine 99 contacts GTP. Serine 123 is an S-adenosyl-L-methionine binding site. Lysine 160 is a GTP binding site. Position 194 (methionine 194) interacts with S-adenosyl-L-methionine. [4Fe-4S] cluster is bound by residues cysteine 257 and cysteine 260. A GTP-binding site is contributed by 262-264; it reads RLR. Cysteine 274 is a [4Fe-4S] cluster binding site.

It belongs to the radical SAM superfamily. MoaA family. In terms of assembly, monomer and homodimer. The cofactor is [4Fe-4S] cluster.

It catalyses the reaction GTP + AH2 + S-adenosyl-L-methionine = (8S)-3',8-cyclo-7,8-dihydroguanosine 5'-triphosphate + 5'-deoxyadenosine + L-methionine + A + H(+). Its pathway is cofactor biosynthesis; molybdopterin biosynthesis. In terms of biological role, catalyzes the cyclization of GTP to (8S)-3',8-cyclo-7,8-dihydroguanosine 5'-triphosphate. In Salmonella dublin (strain CT_02021853), this protein is GTP 3',8-cyclase.